Reading from the N-terminus, the 210-residue chain is MNANTDILSLRVHAALDALRRGLPVIVADDADRENEADLILAADTLTVPEMARMIRDGSGIVCLCLTPERAERLQLPPMAAENGSRYGTAFTVAIEAAQGVTTGVSAADRTTTIRAAIHPDAKPGDLVRPGHVYPIVARAGGVRERRGHTEASVELARLAGFSPAGVLCELMNPDGTMMRGQQVQDYAERHDLPQLSVAELAEWLQREPA.

D-ribulose 5-phosphate is bound by residues 33–34 (RE), Asp38, 146–150 (RRGHT), and Glu170. Glu34 is a Mg(2+) binding site. His149 contacts Mg(2+).

This sequence belongs to the DHBP synthase family. Homodimer. Mg(2+) is required as a cofactor. Requires Mn(2+) as cofactor.

The catalysed reaction is D-ribulose 5-phosphate = (2S)-2-hydroxy-3-oxobutyl phosphate + formate + H(+). Its pathway is cofactor biosynthesis; riboflavin biosynthesis; 2-hydroxy-3-oxobutyl phosphate from D-ribulose 5-phosphate: step 1/1. In terms of biological role, catalyzes the conversion of D-ribulose 5-phosphate to formate and 3,4-dihydroxy-2-butanone 4-phosphate. In Chromobacterium violaceum (strain ATCC 12472 / DSM 30191 / JCM 1249 / CCUG 213 / NBRC 12614 / NCIMB 9131 / NCTC 9757 / MK), this protein is 3,4-dihydroxy-2-butanone 4-phosphate synthase.